Reading from the N-terminus, the 511-residue chain is Trafficking protein particle complex subunit 13 homolog (511 aa).

It belongs to the TRAPPC13 family.

The protein is Trafficking protein particle complex subunit 13 homolog of Dictyostelium discoideum (Social amoeba).